Here is a 454-residue protein sequence, read N- to C-terminus: Repulsive guidance molecule A (454 aa).

Residues 1-47 form the signal peptide; the sequence is MQPPRERLVVTGRAGWMGMGRGAGRSALGLWPTLAFLLCSFPAAISP. Positions 48–169 are cleaved as a propeptide — removed in mature form; the sequence is CKILKCNSEF…NYTHCGLFGD (122 aa). Positions 114–126 are enriched in polar residues; that stretch reads HNCSKDGPTSQPR. The segment at 114–141 is disordered; the sequence is HNCSKDGPTSQPRVRTLPPAGDSQERSD. N-linked (GlcNAc...) asparagine glycans are attached at residues asparagine 115 and asparagine 160. 2 disulfide bridges follow: cysteine 146–cysteine 227 and cysteine 164–cysteine 316. An N-linked (GlcNAc...) asparagine glycan is attached at asparagine 388. The GPI-anchor amidated alanine moiety is linked to residue alanine 427. The propeptide at 428–454 is removed in mature form; sequence AAATTFPLAPQILLGTIPLLVLLPVLW.

Belongs to the repulsive guidance molecule (RGM) family. In terms of assembly, interacts with NEO1, BMP2 and BMP4. In terms of processing, autocatalytically cleaved at low pH; the two chains remain linked via two disulfide bonds. In terms of tissue distribution, expressed in gradient in periventricular layers of the developing nervous system. In adult, expressed in scattered cells throughout the brain.

The protein resides in the cell membrane. Its function is as follows. Member of the repulsive guidance molecule (RGM) family that performs several functions in the developing and adult nervous system. Regulates cephalic neural tube closure, inhibits neurite outgrowth and cortical neuron branching, and the formation of mature synapses. Binding to its receptor NEO1/neogenin induces activation of RHOA-ROCK1/Rho-kinase signaling pathway through UNC5B-ARHGEF12/LARG-PTK2/FAK1 cascade, leading to collapse of the neuronal growth cone and neurite outgrowth inhibition. Furthermore, RGMA binding to NEO1/neogenin leads to HRAS inactivation by influencing HRAS-PTK2/FAK1-AKT1 pathway. It also functions as a bone morphogenetic protein (BMP) coreceptor that may signal through SMAD1, SMAD5, and SMAD8. The polypeptide is Repulsive guidance molecule A (Rgma) (Mus musculus (Mouse)).